Here is a 635-residue protein sequence, read N- to C-terminus: MRAFLLASLASLPAVNVYAHPTHNSRGLTRRAVDLDAFRPKVPTSYTNATAVQADPEIPTLARRADPEQVASELVAKILPDAQFRLVSDHYVGTNGVAHFYYKQTVHGLDVDSGDFNVNIGKDGNVFSFGNSFYKGKLPAAPTLKRDTEAAANALRSAVNVLSLPMSAESATAVPKEGSDAFTITQTSGAVKEPEARLVYVQDASGNLKLAWRVETDIQSNWLLTYVDAEDGSQVHAVVDYAAEATYEVYPWGISDPTEGERVVLTDPFDRQASEFGWHSDGTTEFNTTRGNNGLAHTNWENLSSGYLNFPRPSSADLKFEYPYSLEETDYKAYANASITQLYYTSNAYHDLLHTLGFNERAGNFEINNNGAGGRGGDLVYLNTQDGGGVNNANFLTPPDGQPPRMRMFIWTKTSPSRDSSFDAGVVIHEYTHGLSSRLTGGPANAGCLSSIESGGMGEGWSDFYATAIRLKPADTRATDYPMGAWIEGDSRGIRNFLYSTSMETNPQVYTNVDQYIRVHPIGNIWASMLYEVLWNLIDKHGKNDAAKPDFDANGVPTDGKYLTMKLVLDGMALQPCNPTFVSARDAIIDADKALTGGSNACEIWRGFAKRGLGAGARYDPTTRTDSFELPEGVC.

Positions Met-1–Ala-19 are cleaved as a signal peptide. A propeptide spanning residues His-20–Glu-244 is cleaved from the precursor. N-linked (GlcNAc...) asparagine glycosylation is found at Asn-287, Asn-302, and Asn-336. His-429 provides a ligand contact to Zn(2+). The active site involves Glu-430. His-433 serves as a coordination point for Zn(2+).

It belongs to the peptidase M36 family. Requires Zn(2+) as cofactor.

The protein resides in the secreted. Functionally, secreted metalloproteinase that allows assimilation of proteinaceous substrates. This is Extracellular metalloproteinase MEP (MEP) from Leptosphaeria maculans (strain JN3 / isolate v23.1.3 / race Av1-4-5-6-7-8) (Blackleg fungus).